Reading from the N-terminus, the 83-residue chain is MSHPEEMPVDGTLDATGLNCPEPVMMLHQHIRDLPPGGLLKVIATDPSTRRDIPKFCVFLDHELVDQQEQAGTYLYWIRKNSV.

The active-site Cysteine persulfide intermediate is C20.

It belongs to the sulfur carrier protein TusA family.

It is found in the cytoplasm. Functionally, sulfur carrier protein which probably makes part of a sulfur-relay system. The polypeptide is Sulfur carrier protein TusA (Pseudomonas fluorescens (strain SBW25)).